We begin with the raw amino-acid sequence, 220 residues long: Protein ABA DEFICIENT 4, chloroplastic (220 aa).

The N-terminal 37 residues, 1 to 37 (MGFSSFISQPLSSSLSVMKRNVSAKRSELCLDSSKIR), are a transit peptide targeting the chloroplast. Transmembrane regions (helical) follow at residues 77–97 (IASS…TLMV), 112–132 (SVPY…SWTP), 154–174 (MFSS…VDLF), and 195–215 (SLCL…KAII).

As to expression, expressed in root vasculature, root hairs, leaves, trichomes, sepals, stamens, stigma, pedicels, siliques and embryo.

The protein resides in the plastid. It is found in the chloroplast membrane. Its function is as follows. Required for neoxanthin biosynthesis, an intermediary step in abscisic acid (ABA) biosynthesis. Probably not involved directly in the enzymatic conversion of violaxanthin to neoxanthin. Cannot convert violaxanthin to neoxanthin in vitro. Required for ABA biosynthesis in response to drought stress. Required for neoxanthin biosynthesis which is involved in photoprotection of photosystem II (PSII). Neoxanthin acts as an antioxidant within the photosystem PSII supercomplex. The sequence is that of Protein ABA DEFICIENT 4, chloroplastic from Arabidopsis thaliana (Mouse-ear cress).